A 178-amino-acid chain; its full sequence is Large ribosomal subunit protein uL6 (178 aa).

This sequence belongs to the universal ribosomal protein uL6 family. Part of the 50S ribosomal subunit.

This protein binds to the 23S rRNA, and is important in its secondary structure. It is located near the subunit interface in the base of the L7/L12 stalk, and near the tRNA binding site of the peptidyltransferase center. This is Large ribosomal subunit protein uL6 from Paenarthrobacter aurescens (strain TC1).